Consider the following 218-residue polypeptide: 7-cyano-7-deazaguanine synthase (218 aa).

Residue 9-19 participates in ATP binding; the sequence is YSGGMDSFTVL. Zn(2+)-binding residues include Cys-185, Cys-193, Cys-196, and Cys-199.

Belongs to the QueC family. Zn(2+) is required as a cofactor.

The catalysed reaction is 7-carboxy-7-deazaguanine + NH4(+) + ATP = 7-cyano-7-deazaguanine + ADP + phosphate + H2O + H(+). It participates in purine metabolism; 7-cyano-7-deazaguanine biosynthesis. Catalyzes the ATP-dependent conversion of 7-carboxy-7-deazaguanine (CDG) to 7-cyano-7-deazaguanine (preQ(0)). The sequence is that of 7-cyano-7-deazaguanine synthase from Pseudoalteromonas translucida (strain TAC 125).